Consider the following 518-residue polypeptide: Tyrosine/DOPA decarboxylase 1 (518 aa).

K321 carries the N6-(pyridoxal phosphate)lysine modification.

This sequence belongs to the group II decarboxylase family. Homodimer. The cofactor is pyridoxal 5'-phosphate. In terms of tissue distribution, predominantly expressed in the roots.

It carries out the reaction L-tyrosine + H(+) = tyramine + CO2. The enzyme catalyses L-dopa + H(+) = dopamine + CO2. The catalysed reaction is 5-hydroxy-L-tryptophan + H(+) = serotonin + CO2. In terms of biological role, marginally higher substrate specificity for L-DOPA over L-tyrosine. This Papaver somniferum (Opium poppy) protein is Tyrosine/DOPA decarboxylase 1 (TYDC1).